The following is a 547-amino-acid chain: Rho GTPase-activating protein 36 (547 aa).

The first 40 residues, 1–40 (MGGCIPFLKAARALCPRIMPPLLLLSAFIFLVSVLGGAPG), serve as a signal peptide directing secretion. A Rho-GAP domain is found at 226–426 (MSLNPIAKQI…AMIDNWDVLF (201 aa)). The segment at 485–547 (AVLAQSKPSD…AKTGVSYFFP (63 aa)) is disordered. The span at 524–539 (EQDRPLLRVPREKEAK) shows a compositional bias: basic and acidic residues.

As to quaternary structure, may interacts (via the Rho-GAP domain) with the active form of RAC1. In terms of tissue distribution, detected in the outer root sheath of hair follicles at the level of the stem cell bulge, during the anagen and telogen phases of hair growth (at protein level).

Functionally, GTPase activator for the Rho-type GTPases by converting them to an inactive GDP-bound state. The protein is Rho GTPase-activating protein 36 (ARHGAP36) of Homo sapiens (Human).